Reading from the N-terminus, the 56-residue chain is Zinc finger mu-protein HVO_0758 (56 aa).

Positions 23, 26, 45, and 48 each coordinate Zn(2+). 2 consecutive short sequence motifs (c(P)XCG motif) follow at residues 23 to 27 and 45 to 49; these read CSECG and CADCG.

Monomer.

Its function is as follows. Zinc-binding protein that binds one zinc ion. Is involved in biofilm formation, swarming and glycerol metabolism regulation. This Haloferax volcanii (strain ATCC 29605 / DSM 3757 / JCM 8879 / NBRC 14742 / NCIMB 2012 / VKM B-1768 / DS2) (Halobacterium volcanii) protein is Zinc finger mu-protein HVO_0758.